Reading from the N-terminus, the 603-residue chain is Beta-glucuronidase (603 aa).

Residues aspartate 163 and asparagine 412 each contribute to the D-glucuronate site. The Proton donor role is filled by glutamate 413. D-glucuronate contacts are provided by asparagine 466, tyrosine 472, glutamate 504, tryptophan 549, and lysine 568. Catalysis depends on glutamate 504, which acts as the Nucleophile. The short motif at 566 to 568 (NKK) is the N-K motif element.

Belongs to the glycosyl hydrolase 2 family. As to quaternary structure, homotetramer.

It carries out the reaction a beta-D-glucuronoside + H2O = D-glucuronate + an alcohol. It catalyses the reaction 4-methylumbelliferone beta-D-glucuronate + H2O = 4-methylumbelliferone + D-glucuronate. With respect to regulation, potently inhibited by a set of synthetic compounds like thio-urea derivatives and analogs, and uronic isofagomine (UIFG) derivatives. Inhibitors of gut microbial beta-glucuronidases block the reactivation of glucuronidated cancer drugs, and thereby alleviate drug-induced GI toxicity. Functionally, displays beta-glucuronidase activity with the artificial substrate p-nitrophenyl-beta-D-glucuronide (PNPG) and with 4-methylumbelliferyl-glucuronide. Is likely capable of scavenging glucuronate from a range of chemically distinct xenobiotic and endobiotic glucuronides present in the gastrointestinal (GI) tract, to be able to utilize these diverse sources of carbon. As part of the GI microbiome, this enzyme is able to reactivate glucuronide drug conjugates, such reactivated compounds can significantly damage the GI tract. This is Beta-glucuronidase (uidA) from Escherichia coli (strain K12).